The following is a 150-amino-acid chain: SsrA-binding protein (150 aa).

It belongs to the SmpB family.

Its subcellular location is the cytoplasm. In terms of biological role, required for rescue of stalled ribosomes mediated by trans-translation. Binds to transfer-messenger RNA (tmRNA), required for stable association of tmRNA with ribosomes. tmRNA and SmpB together mimic tRNA shape, replacing the anticodon stem-loop with SmpB. tmRNA is encoded by the ssrA gene; the 2 termini fold to resemble tRNA(Ala) and it encodes a 'tag peptide', a short internal open reading frame. During trans-translation Ala-aminoacylated tmRNA acts like a tRNA, entering the A-site of stalled ribosomes, displacing the stalled mRNA. The ribosome then switches to translate the ORF on the tmRNA; the nascent peptide is terminated with the 'tag peptide' encoded by the tmRNA and targeted for degradation. The ribosome is freed to recommence translation, which seems to be the essential function of trans-translation. The protein is SsrA-binding protein of Borreliella afzelii (strain PKo) (Borrelia afzelii).